A 347-amino-acid polypeptide reads, in one-letter code: Protein RecA (347 aa).

64–71 (GPESSGKT) is a binding site for ATP.

It belongs to the RecA family.

It localises to the cytoplasm. Can catalyze the hydrolysis of ATP in the presence of single-stranded DNA, the ATP-dependent uptake of single-stranded DNA by duplex DNA, and the ATP-dependent hybridization of homologous single-stranded DNAs. It interacts with LexA causing its activation and leading to its autocatalytic cleavage. The sequence is that of Protein RecA from Bartonella quintana (strain Toulouse) (Rochalimaea quintana).